Reading from the N-terminus, the 131-residue chain is Peptide methionine sulfoxide reductase MsrB (131 aa).

The 123-residue stretch at leucine 8 to arginine 130 folds into the MsrB domain. Zn(2+)-binding residues include cysteine 47, cysteine 50, cysteine 96, and cysteine 99. Cysteine 119 serves as the catalytic Nucleophile.

It belongs to the MsrB Met sulfoxide reductase family. Zn(2+) serves as cofactor.

It carries out the reaction L-methionyl-[protein] + [thioredoxin]-disulfide + H2O = L-methionyl-(R)-S-oxide-[protein] + [thioredoxin]-dithiol. The chain is Peptide methionine sulfoxide reductase MsrB from Pseudomonas putida (strain GB-1).